Here is a 430-residue protein sequence, read N- to C-terminus: Asparagine--tRNA ligase (430 aa).

This sequence belongs to the class-II aminoacyl-tRNA synthetase family. As to quaternary structure, homodimer.

It is found in the cytoplasm. The enzyme catalyses tRNA(Asn) + L-asparagine + ATP = L-asparaginyl-tRNA(Asn) + AMP + diphosphate + H(+). The polypeptide is Asparagine--tRNA ligase (Listeria innocua serovar 6a (strain ATCC BAA-680 / CLIP 11262)).